A 194-amino-acid polypeptide reads, in one-letter code: Cysteine and glycine-rich protein 2 (194 aa).

In terms of domain architecture, LIM zinc-binding 1 spans 10–61; sequence CGACGRTVYHAEEVQCDGRSFHRCCFLCMVCRKNLDSTTVAIHDAEVYCKSC. The Nuclear localization signal motif lies at 64–69; it reads KKYGPK. The LIM zinc-binding 2 domain maps to 120 to 171; that stretch reads CSRCGDSVYAAEKVIGAGKPWHKNCFRCAKCGKSLESTTLTEKEGEIYCKGC.

It localises to the nucleus. Totally down-regulated in transformed cells. May therefore take part in the control of cell growth and differentiation. The chain is Cysteine and glycine-rich protein 2 (CSRP2) from Gallus gallus (Chicken).